A 212-amino-acid chain; its full sequence is ER lumen protein-retaining receptor 1-A (212 aa).

At 1 to 4 (MNIF) the chain is on the lumenal side. The helical transmembrane segment at 5–24 (RFLGDISHLSAIFILLLKIW) threads the bilayer. The Cytoplasmic segment spans residues 25 to 32 (KSRSCAGI). A helical transmembrane segment spans residues 33–52 (SGKSQLLFAIVFTARYLDLF). The interval 47–48 (RY) is interaction with the K-D-E-L motif on target proteins. At 53–58 (TNYISF) the chain is on the lumenal side. Residues 59-79 (YNTSMKVVYVASSYATVWMIY) traverse the membrane as a helical segment. The Cytoplasmic segment spans residues 80 to 92 (SKFKATYDGNHDT). The chain crosses the membrane as a helical span at residues 93–110 (FRVEFLIVPTAILAFLVN). Over 111–116 (HDFTPL) the chain is Lumenal. The helical transmembrane segment at 117–135 (EIFWTFSIYLESVAILPQL) threads the bilayer. Residues 136–149 (FMVSKTGEAETITS) are Cytoplasmic-facing. Residues 150-168 (HYLFALGIYRTLYLFNWIW) traverse the membrane as a helical segment. The segment at 159–169 (RTLYLFNWIWR) is interaction with the K-D-E-L motif on target proteins. Residues 169 to 178 (RYQFEGFFDL) are Lumenal-facing. Residues 179–199 (IAIVAGLVQTVLYCDFFYLYV) traverse the membrane as a helical segment. The Cytoplasmic segment spans residues 200-212 (TKVLKGKKLSLPA). The interval 204–207 (KGKK) is important for recycling of cargo proteins with the sequence motif K-D-E-L from the Golgi to the endoplasmic reticulum.

The protein belongs to the ERD2 family.

It localises to the golgi apparatus membrane. The protein resides in the cytoplasmic vesicle. Its subcellular location is the COPI-coated vesicle membrane. It is found in the endoplasmic reticulum membrane. The protein localises to the endoplasmic reticulum-Golgi intermediate compartment membrane. Functionally, receptor for the C-terminal sequence motif K-D-E-L that is present on endoplasmic reticulum resident proteins and that mediates their recycling from the Golgi back to the endoplasmic reticulum. This Xenopus laevis (African clawed frog) protein is ER lumen protein-retaining receptor 1-A (kdelr1-a).